Here is a 226-residue protein sequence, read N- to C-terminus: uncharacterized protein (226 aa).

This is an uncharacterized protein from Caenorhabditis elegans.